The chain runs to 202 residues: 3-isopropylmalate dehydratase small subunit (202 aa).

The protein belongs to the LeuD family. LeuD type 1 subfamily. As to quaternary structure, heterodimer of LeuC and LeuD.

It carries out the reaction (2R,3S)-3-isopropylmalate = (2S)-2-isopropylmalate. It functions in the pathway amino-acid biosynthesis; L-leucine biosynthesis; L-leucine from 3-methyl-2-oxobutanoate: step 2/4. Catalyzes the isomerization between 2-isopropylmalate and 3-isopropylmalate, via the formation of 2-isopropylmaleate. The chain is 3-isopropylmalate dehydratase small subunit from Rhizobium rhizogenes (strain K84 / ATCC BAA-868) (Agrobacterium radiobacter).